Consider the following 72-residue polypeptide: Disintegrin cotiarin (72 aa).

A Disintegrin domain is found at 1–72; the sequence is EAGEECDCGA…SADCPRNRFH (72 aa). 6 disulfides stabilise this stretch: C6–C21, C8–C16, C15–C38, C29–C35, C34–C59, and C47–C66. Positions 51-53 match the Cell attachment site motif; that stretch reads RGD. The tract at residues 51–72 is disordered; the sequence is RGDNPDDRCTGQSADCPRNRFH.

This sequence belongs to the venom metalloproteinase (M12B) family. P-II subfamily. P-IIa sub-subfamily. Monomer. As to expression, expressed by the venom gland.

The protein resides in the secreted. Inhibits fibrinogen interaction with platelets. Acts by binding to alpha-IIb/beta-3 (ITGA2B/ITGB3) on the platelet surface and inhibits aggregation induced by ADP, thrombin, platelet-activating factor and collagen. This is Disintegrin cotiarin from Bothrops cotiara (Cotiara).